A 450-amino-acid chain; its full sequence is Neutral protease 2 homolog AFUB_070680 (450 aa).

The N-terminal stretch at 1–19 (MKITALASAILAVAQGALA) is a signal peptide. The propeptide occupies 20-172 (LPARAPALDI…PASIKPLDRR (153 aa)). 2 disulfides stabilise this stretch: C179–C251 and C258–C276. Residue H300 coordinates Zn(2+). E301 is a catalytic residue. 2 residues coordinate Zn(2+): H304 and D315. Positions 364–392 (QPGQTEPGTQTMWDGYSQPGQTEPGTQTM) are enriched in polar residues. The tract at residues 364-416 (QPGQTEPGTQTMWDGYSQPGQTEPGTQTMWDGYSQPGQTEPGTQTTWDGYSQP) is disordered. The segment covering 398–409 (QPGQTEPGTQTT) has biased composition (low complexity).

Belongs to the peptidase M35 family. Zn(2+) serves as cofactor.

It localises to the secreted. It carries out the reaction Preferential cleavage of bonds with hydrophobic residues in P1'. Also 3-Asn-|-Gln-4 and 8-Gly-|-Ser-9 bonds in insulin B chain.. Its function is as follows. Secreted metalloproteinase that allows assimilation of proteinaceous substrates. Shows high activities on basic nuclear substrates such as histone and protamine. May be involved in virulence. The sequence is that of Neutral protease 2 homolog AFUB_070680 from Aspergillus fumigatus (strain ATCC MYA-4609 / CBS 101355 / FGSC A1100 / Af293) (Neosartorya fumigata).